The chain runs to 486 residues: Probable glucan endo-1,3-beta-glucosidase eglC (486 aa).

The signal sequence occupies residues Met1 to Ala18. Asn84 carries an N-linked (GlcNAc...) asparagine glycan. The active-site Proton donor is Glu128. Residue Asn183 is glycosylated (N-linked (GlcNAc...) asparagine). Glu239 (nucleophile) is an active-site residue. Asn315, Asn386, Asn396, and Asn404 each carry an N-linked (GlcNAc...) asparagine glycan. The tract at residues Ala330–Thr458 is disordered. 2 stretches are compositionally biased toward low complexity: residues Gly341 to Asn404 and Ser413 to Ser424. The span at Ala430–Gly442 shows a compositional bias: polar residues. The span at Gly445–Thr458 shows a compositional bias: low complexity. Gly463 carries the GPI-anchor amidated glycine lipid modification. A propeptide spans Ala464–Ala486 (removed in mature form).

The protein belongs to the glycosyl hydrolase 17 family. Post-translationally, the GPI-anchor is attached to the protein in the endoplasmic reticulum and serves to target the protein to the cell surface. There, the glucosamine-inositol phospholipid moiety is cleaved off and the GPI-modified mannoprotein is covalently attached via its lipidless GPI glycan remnant to the 1,6-beta-glucan of the outer cell wall layer.

The protein resides in the cell membrane. Its subcellular location is the secreted. It is found in the cell wall. It carries out the reaction Hydrolysis of (1-&gt;3)-beta-D-glucosidic linkages in (1-&gt;3)-beta-D-glucans.. In terms of biological role, glucanases play a role in cell expansion during growth, in cell-cell fusion during mating, and in spore release during sporulation. This enzyme may be involved in beta-glucan degradation and also function biosynthetically as a transglycosylase. In Aspergillus terreus (strain NIH 2624 / FGSC A1156), this protein is Probable glucan endo-1,3-beta-glucosidase eglC (eglC).